The following is a 506-amino-acid chain: Maturase K (506 aa).

The protein belongs to the intron maturase 2 family. MatK subfamily.

It is found in the plastid. It localises to the chloroplast. In terms of biological role, usually encoded in the trnK tRNA gene intron. Probably assists in splicing its own and other chloroplast group II introns. In Erica tetralix (Cross-leaved heath), this protein is Maturase K.